The sequence spans 424 residues: MAMVVSSWRDPQDDVAGGNPGGPNPAAQAARGGGGGAGEQQQQQAGSGAPHTPQTPGQPGAPATPGTAGDKGQGPPGSGQSQQHIECVVCGDKSSGKHYGQFTCEGCKSFFKRSVRRNLTYTCRANRNCPIDQHHRNQCQYCRLKKCLKVGMRREAVQRGRMPPTQPNPGQYALTNGDPLNGHCYLSGYISLLLRAEPYPTSRYGSQCMQPNNIMGIENICELAARLLFSAVEWARNIPFFPDLQITDQVSLLRLTWSELFVLNAAQCSMPLHVAPLLAAAGLHASPMSADRVVAFMDHIRIFQEQVEKLKALHVDSAEYSCLKAIVLFTSDACGLSDAAHIESLQEKSQCALEEYVRSQYPNQPSRFGKLLLRLPSLRTVSSSVIEQLFFVRLVGKTPIETLIRDMLLSGSSFNWPYMSIQCS.

The disordered stretch occupies residues 1 to 82; that stretch reads MAMVVSSWRD…QGPPGSGQSQ (82 aa). The segment covering 39-68 has biased composition (low complexity); it reads EQQQQQAGSGAPHTPQTPGQPGAPATPGTA. A DNA-binding region (nuclear receptor) is located at residues 84–159; that stretch reads HIECVVCGDK…VGMRREAVQR (76 aa). 2 NR C4-type zinc fingers span residues 87 to 107 and 123 to 147; these read CVVCGDKSSGKHYGQFTCEGC and CRANRNCPIDQHHRNQCQYCRLKKC. Positions 185–411 constitute an NR LBD domain; sequence YLSGYISLLL…TLIRDMLLSG (227 aa).

This sequence belongs to the nuclear hormone receptor family. NR2 subfamily. In terms of assembly, binds DNA as dimer; homodimer and probable heterodimer with NR2F6. Interacts with GTF2B; this interaction is direct. Interacts with COPS2.

The protein resides in the nucleus. Its function is as follows. Coup (chicken ovalbumin upstream promoter) transcription factor binds to the ovalbumin promoter and, in conjunction with another protein (S300-II) stimulates initiation of transcription. Binds to both direct repeats and palindromes of the 5'-AGGTCA-3' motif. Represses transcriptional activity of LHCG. The protein is COUP transcription factor 1 (NR2F1) of Bos taurus (Bovine).